Here is a 1028-residue protein sequence, read N- to C-terminus: Protein SMAX1-LIKE 5 (1028 aa).

Residues 8–199 enclose the Clp R domain; sequence IQQTLTTEAA…CVEDCSVSSV (192 aa). Repeat stretches follow at residues 12–102 and 116–199; these read LTTE…LNRL and LANA…VSSV. The EAR signature appears at 871 to 875; that stretch reads LDLNI.

It belongs to the ClpA/ClpB family. As to quaternary structure, interacts probably with TPL/TPR in an EAR-motif dependent manner. In terms of tissue distribution, detected in roots, seedlings and axillary branches.

In terms of biological role, may function in a transcriptional corepressor complex. This chain is Protein SMAX1-LIKE 5, found in Arabidopsis thaliana (Mouse-ear cress).